A 322-amino-acid chain; its full sequence is Protein-L-isoaspartate O-methyltransferase (322 aa).

Positions 1-101 are disordered; it reads MSGERAKRFP…AKQGDRSAAP (101 aa). Over residues 14-29 the composition is skewed to basic and acidic residues; it reads EDLKREPRKPEGRVAE. Composition is skewed to low complexity over residues 33-51 and 76-91; these read AGDA…PAAA and HAPA…PQGG. Residue Ser170 is part of the active site.

It belongs to the methyltransferase superfamily. L-isoaspartyl/D-aspartyl protein methyltransferase family.

It localises to the cytoplasm. The catalysed reaction is [protein]-L-isoaspartate + S-adenosyl-L-methionine = [protein]-L-isoaspartate alpha-methyl ester + S-adenosyl-L-homocysteine. Its function is as follows. Catalyzes the methyl esterification of L-isoaspartyl residues in peptides and proteins that result from spontaneous decomposition of normal L-aspartyl and L-asparaginyl residues. It plays a role in the repair and/or degradation of damaged proteins. This Burkholderia pseudomallei (strain 1710b) protein is Protein-L-isoaspartate O-methyltransferase.